The following is a 435-amino-acid chain: 3-phosphoshikimate 1-carboxyvinyltransferase (435 aa).

Residues Lys-23, Ser-24, and Arg-28 each coordinate 3-phosphoshikimate. Phosphoenolpyruvate is bound at residue Lys-23. Phosphoenolpyruvate-binding residues include Gly-97 and Arg-125. Residues Ser-170, Ser-171, Gln-172, Ser-198, Asp-314, Asn-338, and Lys-342 each contribute to the 3-phosphoshikimate site. Gln-172 provides a ligand contact to phosphoenolpyruvate. Asp-314 serves as the catalytic Proton acceptor. Phosphoenolpyruvate-binding residues include Arg-346, Arg-388, and Lys-413.

It belongs to the EPSP synthase family. As to quaternary structure, monomer.

Its subcellular location is the cytoplasm. The catalysed reaction is 3-phosphoshikimate + phosphoenolpyruvate = 5-O-(1-carboxyvinyl)-3-phosphoshikimate + phosphate. It participates in metabolic intermediate biosynthesis; chorismate biosynthesis; chorismate from D-erythrose 4-phosphate and phosphoenolpyruvate: step 6/7. In terms of biological role, catalyzes the transfer of the enolpyruvyl moiety of phosphoenolpyruvate (PEP) to the 5-hydroxyl of shikimate-3-phosphate (S3P) to produce enolpyruvyl shikimate-3-phosphate and inorganic phosphate. The chain is 3-phosphoshikimate 1-carboxyvinyltransferase from Sodalis glossinidius (strain morsitans).